Reading from the N-terminus, the 370-residue chain is tRNA-specific 2-thiouridylase MnmA (370 aa).

Residues 19–26 (AMSGGVDS) and leucine 45 contribute to the ATP site. The Nucleophile role is filled by cysteine 113. A disulfide bridge links cysteine 113 with cysteine 209. Glycine 137 lines the ATP pocket. Positions 159–161 (KDQ) are interaction with tRNA. The active-site Cysteine persulfide intermediate is the cysteine 209.

Belongs to the MnmA/TRMU family.

It is found in the cytoplasm. It catalyses the reaction S-sulfanyl-L-cysteinyl-[protein] + uridine(34) in tRNA + AH2 + ATP = 2-thiouridine(34) in tRNA + L-cysteinyl-[protein] + A + AMP + diphosphate + H(+). Functionally, catalyzes the 2-thiolation of uridine at the wobble position (U34) of tRNA, leading to the formation of s(2)U34. This is tRNA-specific 2-thiouridylase MnmA from Rickettsia conorii (strain ATCC VR-613 / Malish 7).